The primary structure comprises 147 residues: Large ribosomal subunit protein uL15 (147 aa).

The disordered stretch occupies residues 1–57 (MRLEDLRPTPGSMKKRKRVGRGPGSGHGKTSGRGHKGQKARGTGKVHPWFEGGQTPL). Positions 30–44 (TSGRGHKGQKARGTG) are enriched in basic residues.

Belongs to the universal ribosomal protein uL15 family. As to quaternary structure, part of the 50S ribosomal subunit.

In terms of biological role, binds to the 23S rRNA. The polypeptide is Large ribosomal subunit protein uL15 (Thermotoga neapolitana (strain ATCC 49049 / DSM 4359 / NBRC 107923 / NS-E)).